The chain runs to 187 residues: Threonylcarbamoyl-AMP synthase (187 aa).

Positions 4-187 (TLDLDRAVAT…DARSGQILRD (184 aa)) constitute a YrdC-like domain.

The protein belongs to the SUA5 family. TsaC subfamily.

It localises to the cytoplasm. The catalysed reaction is L-threonine + hydrogencarbonate + ATP = L-threonylcarbamoyladenylate + diphosphate + H2O. In terms of biological role, required for the formation of a threonylcarbamoyl group on adenosine at position 37 (t(6)A37) in tRNAs that read codons beginning with adenine. Catalyzes the conversion of L-threonine, HCO(3)(-)/CO(2) and ATP to give threonylcarbamoyl-AMP (TC-AMP) as the acyladenylate intermediate, with the release of diphosphate. The sequence is that of Threonylcarbamoyl-AMP synthase from Xanthomonas euvesicatoria pv. vesicatoria (strain 85-10) (Xanthomonas campestris pv. vesicatoria).